Here is an 893-residue protein sequence, read N- to C-terminus: Alanine--tRNA ligase (893 aa).

The Zn(2+) site is built by H573, H577, C676, and H680. The interval 853–872 is disordered; sequence LGGGGGGKDDLAQGGGQDPS.

The protein belongs to the class-II aminoacyl-tRNA synthetase family. It depends on Zn(2+) as a cofactor.

It is found in the cytoplasm. The catalysed reaction is tRNA(Ala) + L-alanine + ATP = L-alanyl-tRNA(Ala) + AMP + diphosphate. Its function is as follows. Catalyzes the attachment of alanine to tRNA(Ala) in a two-step reaction: alanine is first activated by ATP to form Ala-AMP and then transferred to the acceptor end of tRNA(Ala). Also edits incorrectly charged Ser-tRNA(Ala) and Gly-tRNA(Ala) via its editing domain. This chain is Alanine--tRNA ligase, found in Kineococcus radiotolerans (strain ATCC BAA-149 / DSM 14245 / SRS30216).